Here is a 154-residue protein sequence, read N- to C-terminus: Telokin (154 aa).

Residues 1 to 24 (ISGMSGRKASGSSPTSPINANKVE) are disordered. The span at 10–19 (SGSSPTSPIN) shows a compositional bias: polar residues. Residues 42–133 (PYFTKTILDM…ATCTAELLVE (92 aa)) enclose the Ig-like C2-type domain. Positions 134 to 154 (TMGKEGEGEGEGEEDEEEEEE) are disordered. Acidic residues predominate over residues 141 to 154 (GEGEGEEDEEEEEE).

This sequence belongs to the protein kinase superfamily. CAMK Ser/Thr protein kinase family. In terms of assembly, binds calmodulin.

Functionally, corresponds to the C-terminus of smooth muscle myosin light chain kinase. This chain is Telokin, found in Meleagris gallopavo (Wild turkey).